Reading from the N-terminus, the 1350-residue chain is Tectonin beta-propeller repeat-containing protein (1350 aa).

TECPR repeat units lie at residues 23-59 (GAWR…VHVH), 233-271 (LRWT…VRTG), 280-320 (DSWL…FRRG), and 336-371 (KGWV…HRSG). A compositionally biased stretch (low complexity) spans 396–415 (SSLSIVSRKSGGSSSTPGSK). Disordered stretches follow at residues 396-420 (SSLS…QSFS) and 671-691 (SGSG…SGTF). One can recognise a Galectin domain in the interval 816 to 955 (YYNTLYNGMP…RIKLFNVLYR (140 aa)). 4 TECPR repeats span residues 966 to 1000 (MHWR…VYNG), 1187 to 1223 (DAWE…FRYG), 1232 to 1269 (DAWQ…VRKE), and 1278 to 1322 (SHWQ…RRCG).

Belongs to the TECPR1 family.

Its function is as follows. Involved in peroxisome biogenesis. This chain is Tectonin beta-propeller repeat-containing protein (Pex23), found in Drosophila melanogaster (Fruit fly).